The following is a 1435-amino-acid chain: Nitric oxide synthase 1 (1435 aa).

The segment at Met1 to Leu206 is interaction with NOSIP. The PDZ domain occupies Ser17 to Gly99. Disordered regions lie at residues Thr110–Gly201 and Asn277–Pro304. An interaction with DYNLL1/PIN region spans residues Gln164 to Asp246. The span at Gly290–Pro300 shows a compositional bias: polar residues. Ser340 serves as a coordination point for (6R)-L-erythro-5,6,7,8-tetrahydrobiopterin. Cys421 contributes to the heme b binding site. The L-arginine site is built by Gln484, Trp593, Tyr594, and Glu598. (6R)-L-erythro-5,6,7,8-tetrahydrobiopterin contacts are provided by Val683, Trp684, and Phe697. Tyr712 contributes to the heme b binding site. Positions Lys731 to Met751 are calmodulin-binding. One can recognise a Flavodoxin-like domain in the interval Ala761–Phe941. FMN contacts are provided by Thr767, Glu768, Thr769, Lys771, Ser772, Ser813, Thr814, and Gly818. Ser853, Ser863, and Ser864 each carry phosphoserine. Residues Ser892, His897, Cys899, Glu925, and Gln929 each coordinate FMN. The FAD-binding FR-type domain maps to Lys996 to Pro1243. Arg1016 is a binding site for NADP(+). 7 residues coordinate FAD: His1038, Arg1179, Tyr1180, Tyr1181, Ser1182, Thr1197, and Ala1199. Ser1202 contributes to the NADP(+) binding site. Tyr1203, Val1216, Cys1217, and Ser1218 together coordinate FAD. NADP(+)-binding residues include Thr1257, Arg1290, Ser1319, Arg1320, Lys1326, Tyr1328, Gln1330, Asp1363, Thr1404, and Arg1406.

The protein belongs to the NOS family. As to quaternary structure, homodimer. Interacts with DLG4; the interaction possibly being prevented by the association between NOS1 and CAPON. Forms a ternary complex with CAPON and RASD1. Forms a ternary complex with CAPON and SYN1. Interacts with ZDHHC23. Interacts with NOSIP; which may impair its synaptic location. Interacts with HTR4. Interacts with SLC6A4. Interacts with VAC14. Interacts (via N-terminal domain) with DLG4 (via N-terminal tandem pair of PDZ domains). Interacts with SLC6A4. Forms a complex with ASL, ASS1 and SLC7A1; the complex regulates cell-autonomous L-arginine synthesis and citrulline recycling while channeling extracellular L-arginine to nitric oxide synthesis pathway. Interacts with DMD; localizes NOS1 to sarcolemma in muscle cells. Interacts with DYNLL1; inhibits the nitric oxide synthase activity. Heme b serves as cofactor. It depends on FAD as a cofactor. FMN is required as a cofactor. The cofactor is (6R)-L-erythro-5,6,7,8-tetrahydrobiopterin. In terms of processing, ubiquitinated; mediated by STUB1/CHIP in the presence of Hsp70 and Hsp40 (in vitro).

The protein resides in the cell membrane. The protein localises to the sarcolemma. It is found in the cell projection. It localises to the dendritic spine. It carries out the reaction 2 L-arginine + 3 NADPH + 4 O2 + H(+) = 2 L-citrulline + 2 nitric oxide + 3 NADP(+) + 4 H2O. Stimulated by calcium/calmodulin. Inhibited by DYNLL1 that prevents the dimerization of the protein. Inhibited by NOSIP. In terms of biological role, produces nitric oxide (NO) which is a messenger molecule with diverse functions throughout the body. In the brain and peripheral nervous system, NO displays many properties of a neurotransmitter. Probably has nitrosylase activity and mediates cysteine S-nitrosylation of cytoplasmic target proteins such SRR. The protein is Nitric oxide synthase 1 (NOS1) of Oryctolagus cuniculus (Rabbit).